The sequence spans 3124 residues: Collagen alpha-1(XII) chain (3124 aa).

Positions 1 to 23 (MRTALCSAVAALCAAALLSSIEA) are cleaved as a signal peptide. The Fibronectin type-III 1 domain maps to 27 to 117 (PPSDLNFTII…GQLTIQTGGP (91 aa)). Asn32 carries N-linked (GlcNAc...) asparagine glycosylation. The VWFA 1 domain occupies 139–311 (DLVFLVDGSW…DGIVDIQNEI (173 aa)). Ser328 carries an O-linked (Xyl...) (chondroitin sulfate) serine glycan. Residues 335 to 424 (PASNLVATQI…ITIMEKTQQV (90 aa)) form the Fibronectin type-III 2 domain. Residues 439 to 615 (DVVFLVDGSY…RISFELTQSV (177 aa)) form the VWFA 2 domain. 6 Fibronectin type-III domains span residues 633-722 (PAKN…LEVK), 724-815 (APRN…VRGN), 816-906 (PRNL…LEER), 908-998 (SPRN…VSQS), 999-1087 (ARTV…ASPF), and 1089-1179 (PPRN…TLSD). O-linked (Xyl...) (chondroitin sulfate) serine glycosylation is found at Ser797, Ser890, and Ser981. Residues Asn1006, Asn1032, and Asn1044 are each glycosylated (N-linked (GlcNAc...) asparagine). Residues 1075 to 1100 (KSRKAEGTTASPFKPPRNLRTSDSTM) form a disordered region. Residues 1199–1371 (DIVLLVDGSW…SFLASIGEDV (173 aa)) form the VWFA 3 domain. Fibronectin type-III domains follow at residues 1387–1476 (PPSN…YPLS), 1477–1568 (SVRN…LPLP), 1569–1659 (GPRG…VPSP), 1660–1756 (VNLR…TPAP), 1759–1853 (GPRN…TVKN), 1854–1939 (MLVY…LERG), 1940–2030 (TPRN…LPRS), 2031–2121 (GPRN…VGLL), 2122–2210 (PPQN…LYLN), and 2211–2299 (VTDL…LKPT). Residue Asn1512 is glycosylated (N-linked (GlcNAc...) asparagine). The N-linked (GlcNAc...) asparagine glycan is linked to Asn1767. Asn2210 and Asn2273 each carry an N-linked (GlcNAc...) asparagine glycan. Residues 2327-2500 (DIVFLTDASW…DAFEKIQDNL (174 aa)) enclose the VWFA 4 domain. A nonhelical region (NC3) region spans residues 2455–2750 (SGFSVFVVGV…NACTCTQDSV (296 aa)). The Laminin G-like domain occupies 2524–2716 (GFKMLESYNL…IQNFDIVCSP (193 aa)). N-linked (GlcNAc...) asparagine glycans are attached at residues Asn2532 and Asn2683. Disordered regions lie at residues 2749–2900 (SVGP…GDRG) and 2935–3080 (PNDY…EGEP). Collagen-like domains are found at residues 2751 to 2802 (GPPG…GPNG), 2807 to 2858 (GEPG…GPRG), and 2859 to 2900 (PPGP…GDRG). The triple-helical region (COL2) with 1 imperfection stretch occupies residues 2751-2902 (GPPGPPGPPG…KGEKGDRGDI (152 aa)). 2 stretches are compositionally biased toward pro residues: residues 2752-2761 (PPGPPGPPGG) and 2788-2798 (PPGPQGPPGPQ). Residues 2821-2830 (PGLPGRSGTP) are compositionally biased toward low complexity. Residues 2832–2841 (LPGPPGPVGP) show a composition bias toward pro residues. 2 stretches are compositionally biased toward low complexity: residues 2842–2854 (PGERGFTGKDGPT) and 2865–2878 (APGVPGVAGPSGKP). Residues 2899–2901 (RGD) carry the Cell attachment site motif. The nonhelical region (NC2) stretch occupies residues 2903–2945 (ASQNMMRAVARQVCEQLINGQMSRFNQMLNQIPNDYYSNRNQP). A compositionally biased stretch (polar residues) spans 2935-2944 (PNDYYSNRNQ). Residues 2945–2954 (PGPPGPPGPP) are compositionally biased toward pro residues. The region spanning 2945 to 2994 (PGPPGPPGPPGAAGTRGEPGPGGRPGFPGPPGVQGPPGERGMPGEKGERG) is the Collagen-like 4 domain. Positions 2946 to 3048 (GPPGPPGPPG…RGPPGPPGYC (103 aa)) are triple-helical region (COL1) with 2 imperfections. Residues 2961-2970 (GEPGPGGRPG) show a composition bias toward gly residues. Residues 3010-3024 (QGESRTGPPGSTGSR) show a composition bias toward low complexity. A nonhelical region (NC1) region spans residues 3049–3124 (DSSQCASIPY…SLSRKAKRKP (76 aa)).

Belongs to the fibril-associated collagens with interrupted helices (FACIT) family. As to quaternary structure, trimer of identical chains each containing 190 kDa of non-triple-helical sequences. In terms of processing, the triple-helical tail is stabilized by disulfide bonds at each end. Prolines at the third position of the tripeptide repeating unit (G-X-Y) are hydroxylated in some or all of the chains. Post-translationally, O-glycosylated; glycosaminoglycan of chondroitin-sulfate type. As to expression, type XII collagen is present in tendons, ligaments, perichondrium, and periosteum, all dense connective tissues containing type I collagen.

It localises to the secreted. The protein localises to the extracellular space. It is found in the extracellular matrix. Functionally, type XII collagen interacts with type I collagen-containing fibrils, the COL1 domain could be associated with the surface of the fibrils, and the COL2 and NC3 domains may be localized in the perifibrillar matrix. This chain is Collagen alpha-1(XII) chain (COL12A1), found in Gallus gallus (Chicken).